The sequence spans 67 residues: Large ribosomal subunit protein uL29 (67 aa).

Belongs to the universal ribosomal protein uL29 family.

This is Large ribosomal subunit protein uL29 from Magnetococcus marinus (strain ATCC BAA-1437 / JCM 17883 / MC-1).